The following is a 291-amino-acid chain: Gamma-sarcoglycan (291 aa).

A helical; Signal-anchor for type II membrane protein transmembrane segment spans residues leucine 38 to leucine 58. Topologically, residues lysine 59–leucine 291 are extracellular. N-linked (GlcNAc...) asparagine glycosylation is present at asparagine 110. Disulfide bonds link cysteine 265-cysteine 290 and cysteine 267-cysteine 283.

The protein belongs to the sarcoglycan beta/delta/gamma/zeta family. As to quaternary structure, interacts with the syntrophin SNTA1. Cross-link to form 2 major subcomplexes: one consisting of SGCB, SGCD and SGCG and the other consisting of SGCB and SGCD. The association between SGCB and SGCG is particularly strong while SGCA is loosely associated with the other sarcoglycans. Interacts with FLNC. Post-translationally, disulfide bonds are present.

Its subcellular location is the cell membrane. It localises to the sarcolemma. It is found in the cytoplasm. The protein resides in the cytoskeleton. Component of the sarcoglycan complex, a subcomplex of the dystrophin-glycoprotein complex which forms a link between the F-actin cytoskeleton and the extracellular matrix. The polypeptide is Gamma-sarcoglycan (SGCG) (Canis lupus familiaris (Dog)).